The primary structure comprises 210 residues: Large ribosomal subunit protein uL3 (210 aa).

Positions 125 to 151 (RHGQSRGPMSHGSRYHRRPGSMGPVAP) are disordered.

This sequence belongs to the universal ribosomal protein uL3 family. Part of the 50S ribosomal subunit. Forms a cluster with proteins L14 and L19.

One of the primary rRNA binding proteins, it binds directly near the 3'-end of the 23S rRNA, where it nucleates assembly of the 50S subunit. This Bacillus cereus (strain Q1) protein is Large ribosomal subunit protein uL3.